A 406-amino-acid polypeptide reads, in one-letter code: Proteasome-activating nucleotidase 1 (406 aa).

Positions 13 to 72 form a coiled coil; that stretch reads YDKDSASQQEKITALQERLEVLETQNEEMRDKLLDTNAENNKYQQKLERLTHENKKLKQS. ATP contacts are provided by residues 194–199 and H333; that span reads GTGKTM. The tract at residues 404 to 406 is docks into pockets in the proteasome alpha-ring to cause gate opening; that stretch reads AFA.

The protein belongs to the AAA ATPase family. Homododecamer, in a proposed two stacked hexameric ring configuration, but may also form homohexamer. The hexameric complex has likely a two-ring architecture resembling a top hat that caps the 20S proteasome core at one or both ends. Upon ATP-binding, the C-terminus of PAN probably interacts with the alpha-rings of the proteasome core by binding to the intersubunit pockets. Interacts with SAMP1-MoaE conjugate in vitro, but does not bind to SAMP1 or MoaE alone. Interacts with NcsA.

It localises to the cytoplasm. Its activity is regulated as follows. ATPase activity is inhibited by EDTA in vitro. Functionally, ATPase which is responsible for recognizing, binding, unfolding and translocation of substrate proteins into the archaeal 20S proteasome core particle. Is essential for opening the gate of the 20S proteasome via an interaction with its C-terminus, thereby allowing substrate entry and access to the site of proteolysis. Thus, the C-terminus of the proteasomal ATPase functions like a 'key in a lock' to induce gate opening and therefore regulate proteolysis. Unfolding activity requires energy from ATP hydrolysis, whereas ATP binding alone promotes ATPase-20S proteasome association which triggers gate opening, and supports translocation of unfolded substrates. Is also able to cleave other nucleoside triphosphates including GTP and TTP, but the rate of hydrolysis is 4- to 5-fold slower than for ATP. In Haloferax volcanii (strain ATCC 29605 / DSM 3757 / JCM 8879 / NBRC 14742 / NCIMB 2012 / VKM B-1768 / DS2) (Halobacterium volcanii), this protein is Proteasome-activating nucleotidase 1.